We begin with the raw amino-acid sequence, 724 residues long: WW domain-containing protein ZK1098.1 (724 aa).

WW domains follow at residues 78 to 111 (PSVESDWSVHTNEKGTPYYHNRVTKQTSWIKPDV) and 123 to 156 (QPQQGQWKEFMSDDGKPYYYNTLTKKTQWVKPDG). FF domains follow at residues 224-282 (KKRQ…WKVQ), 295-349 (IKKS…CIDF), 353-422 (RDKE…HIKQ), 442-502 (QRKV…FVED), 507-562 (YTED…LIEK), and 578-632 (KRRL…YKNG). The disordered stretch occupies residues 626 to 724 (FNHYKNGTSG…KRKRRESEAD (99 aa)). Positions 630–639 (KNGTSGTTAG) are enriched in polar residues. The segment covering 645-657 (KKKKKKDKKKKNK) has biased composition (basic residues). Basic and acidic residues predominate over residues 681-692 (SKEDRMDDEERG). Residues 693–703 (KKSKKSRKRSP) are compositionally biased toward basic residues.

This is WW domain-containing protein ZK1098.1 from Caenorhabditis elegans.